A 509-amino-acid polypeptide reads, in one-letter code: Scavenger receptor class B member 1 (509 aa).

At 1 to 11 the chain is on the cytoplasmic side; it reads MGNLSRARRVT. Residues 12-32 traverse the membrane as a helical segment; it reads AALGFIGLLFAVLGIIMIVMV. Residues 33 to 440 are Extracellular-facing; the sequence is PSIIKQQVLK…YIQLVLMPKV (408 aa). N-linked (GlcNAc...) asparagine glycosylation is found at Asn102, Asn108, Asn173, Asn212, Asn227, Asn255, Asn310, Asn330, and Asn383. Cys251 and Cys384 are oxidised to a cystine. Residues 441 to 461 form a helical membrane-spanning segment; the sequence is LHYAQYVLLALGCVLLLIPII. The Cytoplasmic portion of the chain corresponds to 462–509; it reads YQIRSQEKCYLFWISFKKGSKDKEAVQAYSEFLMTSAPKGTVLQEARL.

This sequence belongs to the CD36 family. Post-translationally, N-glycosylated. The six cysteines of the extracellular domain are all involved in intramolecular disulfide bonds.

Its subcellular location is the cell membrane. The protein resides in the membrane. It is found in the caveola. Its function is as follows. Receptor for different ligands such as phospholipids, cholesterol ester, lipoproteins, phosphatidylserine and apoptotic cells. Receptor for HDL, mediating selective uptake of cholesteryl ether and HDL-dependent cholesterol efflux. Also facilitates the flux of free and esterified cholesterol between the cell surface and apoB-containing lipoproteins and modified lipoproteins, although less efficiently than HDL. May be involved in the phagocytosis of apoptotic cells, via its phosphatidylserine binding activity. In Bos taurus (Bovine), this protein is Scavenger receptor class B member 1 (SCARB1).